The following is a 246-amino-acid chain: 4-hydroxy-tetrahydrodipicolinate reductase (246 aa).

9–14 provides a ligand contact to NAD(+); that stretch reads GNTGRM. NADP(+) is bound at residue Arg36. NAD(+) contacts are provided by residues 78–80 and 104–107; these read GTT and SPNM. The Proton donor/acceptor role is filled by His137. Residue His138 coordinates (S)-2,3,4,5-tetrahydrodipicolinate. Lys141 serves as the catalytic Proton donor. 147 to 148 lines the (S)-2,3,4,5-tetrahydrodipicolinate pocket; it reads GT.

The protein belongs to the DapB family.

The protein localises to the cytoplasm. The catalysed reaction is (S)-2,3,4,5-tetrahydrodipicolinate + NAD(+) + H2O = (2S,4S)-4-hydroxy-2,3,4,5-tetrahydrodipicolinate + NADH + H(+). It carries out the reaction (S)-2,3,4,5-tetrahydrodipicolinate + NADP(+) + H2O = (2S,4S)-4-hydroxy-2,3,4,5-tetrahydrodipicolinate + NADPH + H(+). Its pathway is amino-acid biosynthesis; L-lysine biosynthesis via DAP pathway; (S)-tetrahydrodipicolinate from L-aspartate: step 4/4. Its function is as follows. Catalyzes the conversion of 4-hydroxy-tetrahydrodipicolinate (HTPA) to tetrahydrodipicolinate. The chain is 4-hydroxy-tetrahydrodipicolinate reductase from Chlamydia muridarum (strain MoPn / Nigg).